The primary structure comprises 242 residues: NAD-dependent protein deacetylase (242 aa).

The Deacetylase sirtuin-type domain maps to 1–242 (MQQFEEVHSI…EFVEGLSSRK (242 aa)). Residues A23, T27, F34, R35, Q102, I104, D105, and H120 each coordinate NAD(+). F34 is a binding site for nicotinamide. Residues I104 and D105 each coordinate nicotinamide. H120 acts as the Proton acceptor in catalysis. Residues C128, C131, C148, and C151 each contribute to the Zn(2+) site. T187, S188, N213, and I231 together coordinate NAD(+).

Belongs to the sirtuin family. Class U subfamily. Zn(2+) is required as a cofactor.

It is found in the cytoplasm. It catalyses the reaction N(6)-acetyl-L-lysyl-[protein] + NAD(+) + H2O = 2''-O-acetyl-ADP-D-ribose + nicotinamide + L-lysyl-[protein]. Functionally, NAD-dependent protein deacetylase which modulates the activities of several enzymes which are inactive in their acetylated form. The chain is NAD-dependent protein deacetylase from Bacillus cereus (strain ATCC 10987 / NRS 248).